A 376-amino-acid chain; its full sequence is MAKRDFYDVLGVSKSASPEELKSAYRKLAVKYHPDKNPGDKASEDKFKEAGEAYGVLSDKEKKQNYDNFGHAAFEGGGGRQGGGFGGGFGGADFSDIFEDFFGDFGGGQSRGRRKTNNRGSDLRYDLSITLEEAYEGKKQDIKFSTTEKCNTCNGNGSKPGHSPDRCTVCGGNGKVRSNQGFFTVQQTCPQCAGSGEEITNPCTDCNGQGNKQASKKISVTIPKGVDDGTRIRLAGKGEAGSKGGANGDLYLFVNVHSHDLFKRSDENLFFEFPISIADAALGTTIEIPTIDGGKAKIKIPDGTQNGKQFRLKGKGMPYMRGSGNGDLYVQVNTEVPISLNKEQKALLEKFREIENEKSNPSIKQFFQKAKSFWKN.

The region spanning 5–70 (DFYDVLGVSK…EKKQNYDNFG (66 aa)) is the J domain. Residues 137-215 (GKKQDIKFST…CNGQGNKQAS (79 aa)) form a CR-type zinc finger. C150, C153, C167, C170, C189, C192, C203, and C206 together coordinate Zn(2+). 4 CXXCXGXG motif repeats span residues 150–157 (CNTCNGNG), 167–174 (CTVCGGNG), 189–196 (CPQCAGSG), and 203–210 (CTDCNGQG).

It belongs to the DnaJ family. As to quaternary structure, homodimer. Requires Zn(2+) as cofactor.

It is found in the cytoplasm. Its function is as follows. Participates actively in the response to hyperosmotic and heat shock by preventing the aggregation of stress-denatured proteins and by disaggregating proteins, also in an autonomous, DnaK-independent fashion. Unfolded proteins bind initially to DnaJ; upon interaction with the DnaJ-bound protein, DnaK hydrolyzes its bound ATP, resulting in the formation of a stable complex. GrpE releases ADP from DnaK; ATP binding to DnaK triggers the release of the substrate protein, thus completing the reaction cycle. Several rounds of ATP-dependent interactions between DnaJ, DnaK and GrpE are required for fully efficient folding. Also involved, together with DnaK and GrpE, in the DNA replication of plasmids through activation of initiation proteins. In Pelagibacter ubique (strain HTCC1062), this protein is Chaperone protein DnaJ.